We begin with the raw amino-acid sequence, 161 residues long: ATP synthase subunit b (161 aa).

The helical transmembrane segment at A10 to Y29 threads the bilayer.

This sequence belongs to the ATPase B chain family. In terms of assembly, F-type ATPases have 2 components, F(1) - the catalytic core - and F(0) - the membrane proton channel. F(1) has five subunits: alpha(3), beta(3), gamma(1), delta(1), epsilon(1). F(0) has three main subunits: a(1), b(2) and c(10-14). The alpha and beta chains form an alternating ring which encloses part of the gamma chain. F(1) is attached to F(0) by a central stalk formed by the gamma and epsilon chains, while a peripheral stalk is formed by the delta and b chains.

The protein localises to the cell inner membrane. F(1)F(0) ATP synthase produces ATP from ADP in the presence of a proton or sodium gradient. F-type ATPases consist of two structural domains, F(1) containing the extramembraneous catalytic core and F(0) containing the membrane proton channel, linked together by a central stalk and a peripheral stalk. During catalysis, ATP synthesis in the catalytic domain of F(1) is coupled via a rotary mechanism of the central stalk subunits to proton translocation. Functionally, component of the F(0) channel, it forms part of the peripheral stalk, linking F(1) to F(0). The chain is ATP synthase subunit b from Fervidobacterium nodosum (strain ATCC 35602 / DSM 5306 / Rt17-B1).